The chain runs to 120 residues: UPF0102 protein Moth_0988 (120 aa).

The protein belongs to the UPF0102 family.

In Moorella thermoacetica (strain ATCC 39073 / JCM 9320), this protein is UPF0102 protein Moth_0988.